Here is a 239-residue protein sequence, read N- to C-terminus: Acyl-protein thioesterase 1 (239 aa).

Active-site charge relay system residues include serine 124, aspartate 180, and histidine 213.

The protein belongs to the AB hydrolase superfamily. AB hydrolase 2 family.

The protein localises to the cytoplasm. Its subcellular location is the nucleus. It carries out the reaction S-hexadecanoyl-L-cysteinyl-[protein] + H2O = L-cysteinyl-[protein] + hexadecanoate + H(+). Functionally, hydrolyzes fatty acids from S-acylated cysteine residues in proteins with a strong preference for palmitoylated G-alpha proteins over other acyl substrates. Mediates the deacylation of G-alpha proteins such as GPA1 in vivo, but has weak or no activity toward palmitoylated Ras proteins. Has weak lysophospholipase activity in vitro; however such activity may not exist in vivo. The sequence is that of Acyl-protein thioesterase 1 from Emericella nidulans (strain FGSC A4 / ATCC 38163 / CBS 112.46 / NRRL 194 / M139) (Aspergillus nidulans).